Here is a 325-residue protein sequence, read N- to C-terminus: Beta-1,3-galactosyltransferase brn (325 aa).

The Cytoplasmic portion of the chain corresponds to 1 to 7; that stretch reads MQSKHRK. The chain crosses the membrane as a helical; Signal-anchor for type II membrane protein span at residues 8-28; sequence LLLRCLLVLPLILLVDYCGLL. The Lumenal segment spans residues 29-325; that stretch reads THLHELNFER…WNECRSANYA (297 aa). N-linked (GlcNAc...) asparagine glycosylation is found at N149 and N166.

Belongs to the glycosyltransferase 31 family.

It is found in the golgi apparatus membrane. The enzyme catalyses a ganglioside GM2 (d18:1(4E)) + UDP-alpha-D-galactose = a ganglioside GM1 (d18:1(4E)) + UDP + H(+). Functionally, neurogenic protein essential for the development and maintenance of epithelial structure. Required in the germline for establishing the follicular epithelium and for determining the dorsal-ventral polarity. Collaborates with Notch on the apical surface of follicle cells to mediate germline-follicle cell adhesion. Brn has a role in chorion formation. This Drosophila melanogaster (Fruit fly) protein is Beta-1,3-galactosyltransferase brn (brn).